A 303-amino-acid polypeptide reads, in one-letter code: Tyrosine recombinase XerC (303 aa).

A Core-binding (CB) domain is found at 3–89; sequence IQNDQWVSAF…TLRSFYQFLV (87 aa). A Tyr recombinase domain is found at 110–297; the sequence is KLPSFLYEEE…TKDRLRDVYR (188 aa). Residues Arg-150, Lys-174, His-249, Arg-252, and His-275 contribute to the active site. Residue Tyr-284 is the O-(3'-phospho-DNA)-tyrosine intermediate of the active site.

It belongs to the 'phage' integrase family. XerC subfamily. As to quaternary structure, forms a cyclic heterotetrameric complex composed of two molecules of XerC and two molecules of XerD.

The protein resides in the cytoplasm. Functionally, site-specific tyrosine recombinase, which acts by catalyzing the cutting and rejoining of the recombining DNA molecules. The XerC-XerD complex is essential to convert dimers of the bacterial chromosome into monomers to permit their segregation at cell division. It also contributes to the segregational stability of plasmids. This chain is Tyrosine recombinase XerC, found in Halalkalibacterium halodurans (strain ATCC BAA-125 / DSM 18197 / FERM 7344 / JCM 9153 / C-125) (Bacillus halodurans).